A 473-amino-acid polypeptide reads, in one-letter code: Photosystem II CP43 reaction center protein (473 aa).

Residues methionine 1 to glutamate 14 constitute a propeptide that is removed on maturation. N-acetylthreonine is present on threonine 15. Threonine 15 carries the post-translational modification Phosphothreonine. 5 helical membrane passes run leucine 69–alanine 93, leucine 134–asparagine 155, lysine 178–threonine 200, lysine 255–serine 275, and tryptophan 291–alanine 312. Glutamate 367 contributes to the [CaMn4O5] cluster binding site. The chain crosses the membrane as a helical span at residues arginine 447 to proline 471.

This sequence belongs to the PsbB/PsbC family. PsbC subfamily. As to quaternary structure, PSII is composed of 1 copy each of membrane proteins PsbA, PsbB, PsbC, PsbD, PsbE, PsbF, PsbH, PsbI, PsbJ, PsbK, PsbL, PsbM, PsbT, PsbX, PsbY, PsbZ, Psb30/Ycf12, at least 3 peripheral proteins of the oxygen-evolving complex and a large number of cofactors. It forms dimeric complexes. Requires Binds multiple chlorophylls and provides some of the ligands for the Ca-4Mn-5O cluster of the oxygen-evolving complex. It may also provide a ligand for a Cl- that is required for oxygen evolution. PSII binds additional chlorophylls, carotenoids and specific lipids. as cofactor.

The protein resides in the plastid. It is found in the chloroplast thylakoid membrane. One of the components of the core complex of photosystem II (PSII). It binds chlorophyll and helps catalyze the primary light-induced photochemical processes of PSII. PSII is a light-driven water:plastoquinone oxidoreductase, using light energy to abstract electrons from H(2)O, generating O(2) and a proton gradient subsequently used for ATP formation. The sequence is that of Photosystem II CP43 reaction center protein from Helianthus annuus (Common sunflower).